Consider the following 90-residue polypeptide: N(2)-fixation sustaining protein CowN (90 aa).

Belongs to the CowN family.

Functionally, is required to sustain N(2)-dependent growth in the presence of low levels of carbon monoxide (CO). Probably acts by protecting the N(2) fixation ability of the nitrogenase complex, which is inactivated in the presence of CO. In Halorhodospira halophila (strain DSM 244 / SL1) (Ectothiorhodospira halophila (strain DSM 244 / SL1)), this protein is N(2)-fixation sustaining protein CowN.